A 253-amino-acid chain; its full sequence is MRKRIIAGNWKMHKTLAEAVQFVENVKGHVPPADEVDSVVCAPFLFLDRLVQAADGTDLKIGAQTMHFADQGAYTGEVSPVMLKDLGVTYVILGHSERRQMFAETDETVNKKVLAAFTRGLIPIICCGESLEEREAGQTNAVVASQVEKALAGLTPEQVKQAVIAYEPIWAIGTGKSSTPEDANSVCGHIRSVVSRLFGPEAAEAIRIQYGGSVKPDNIRDFLAQEQIDGALVGGASLEPASFLQLVEAGRHE.

Residue N9–K11 coordinates substrate. Catalysis depends on H95, which acts as the Electrophile. E167 serves as the catalytic Proton acceptor. Substrate-binding positions include G173, S213, and G234–G235. At S213 the chain carries Phosphoserine.

Belongs to the triosephosphate isomerase family. Homodimer.

Its subcellular location is the cytoplasm. It carries out the reaction D-glyceraldehyde 3-phosphate = dihydroxyacetone phosphate. It participates in carbohydrate biosynthesis; gluconeogenesis. It functions in the pathway carbohydrate degradation; glycolysis; D-glyceraldehyde 3-phosphate from glycerone phosphate: step 1/1. Its function is as follows. Involved in the gluconeogenesis. Catalyzes stereospecifically the conversion of dihydroxyacetone phosphate (DHAP) to D-glyceraldehyde-3-phosphate (G3P). In Geobacillus kaustophilus (strain HTA426), this protein is Triosephosphate isomerase.